A 219-amino-acid polypeptide reads, in one-letter code: PRELI domain-containing protein 1, mitochondrial (219 aa).

The PRELI/MSF1 domain occupies 36-174 (TEDIVHREVT…ILAKLQGEAP (139 aa)).

In terms of assembly, forms a complex with TRIAP1 in the mitochondrion intermembrane space. Interacts with OPA1 and AIFM1. Highly expressed in fetal liver; less expressed in fetal brain, lung, and kidney. At the adult stage, expression is drastically reduced in the liver but highly expressed in the spleen, brain, lung, lymph nodes and peripheral blood leukocytes.

Its subcellular location is the mitochondrion. The protein localises to the mitochondrion intermembrane space. The catalysed reaction is a 1,2-diacyl-sn-glycero-3-phosphate(in) = a 1,2-diacyl-sn-glycero-3-phosphate(out). Functionally, involved in the modulation of the mitochondrial apoptotic pathway by ensuring the accumulation of cardiolipin (CL) in mitochondrial membranes. In vitro, the TRIAP1:PRELID1 complex mediates the transfer of phosphatidic acid (PA) between liposomes and probably functions as a PA transporter across the mitochondrion intermembrane space to provide PA for CL synthesis in the inner membrane. Regulates the mitochondrial apoptotic pathway in primary Th cells. Regulates Th cell differentiation by down-regulating STAT6 thereby reducing IL-4-induced Th2 cell number. May be important for the development of vital and immunocompetent organs. The sequence is that of PRELI domain-containing protein 1, mitochondrial (PRELID1) from Homo sapiens (Human).